The sequence spans 182 residues: CDP-diacylglycerol--glycerol-3-phosphate 3-phosphatidyltransferase (182 aa).

The Cytoplasmic portion of the chain corresponds to 2-12 (QFNIPTLLTLF). The chain crosses the membrane as a helical span at residues 13-37 (RVILIPFFVLVFYLPVTWSPFAAAL). Over 38-60 (IFCVAAVTDWFDGFLARRWNQST) the chain is Periplasmic. Residues 61 to 81 (RFGAFLDPVADKVLVAIAMVL) form a helical membrane-spanning segment. The Cytoplasmic segment spans residues 82–86 (VTEHY). A helical transmembrane segment spans residues 87-107 (HSWWVTLPAATMIAREIIISA). Over 108-145 (LREWMAELGKRSSVAVSWIGKVKTTAQMVALAWLLWRP) the chain is Periplasmic. The helical transmembrane segment at 146–168 (NIWVEYVGIALFFVAAVLTLWSM) threads the bilayer. At 169 to 181 (LQYLSAARADLLD) the chain is on the cytoplasmic side.

The protein belongs to the CDP-alcohol phosphatidyltransferase class-I family.

The protein localises to the cell inner membrane. The enzyme catalyses a CDP-1,2-diacyl-sn-glycerol + sn-glycerol 3-phosphate = a 1,2-diacyl-sn-glycero-3-phospho-(1'-sn-glycero-3'-phosphate) + CMP + H(+). It functions in the pathway phospholipid metabolism; phosphatidylglycerol biosynthesis; phosphatidylglycerol from CDP-diacylglycerol: step 1/2. Catalyzes the conversion of cytidine diphosphate diacylglycerol (CDP-DG) and glycerol 3-phosphate into phosphatidylglycerol. Essential for the synthesis of anionic phospholipids, thereby playing a role in balancing the ratio of zwitterionic and anionic phospholipids, which is thought to be important for normal membrane function. The sequence is that of CDP-diacylglycerol--glycerol-3-phosphate 3-phosphatidyltransferase from Shigella boydii serotype 4 (strain Sb227).